The following is a 257-amino-acid chain: Probable pectate lyase E (257 aa).

A signal peptide spans 1–17; it reads MYQKLLLVPLLLTSALA.

The protein belongs to the polysaccharide lyase 3 family. It depends on Ca(2+) as a cofactor.

It is found in the secreted. It carries out the reaction Eliminative cleavage of (1-&gt;4)-alpha-D-galacturonan to give oligosaccharides with 4-deoxy-alpha-D-galact-4-enuronosyl groups at their non-reducing ends.. Pectinolytic enzyme consist of four classes of enzymes: pectin lyase, polygalacturonase, pectin methylesterase and rhamnogalacturonase. Among pectinolytic enzymes, pectin lyase is the most important in depolymerization of pectin, since it cleaves internal glycosidic bonds of highly methylated pectins. Favors pectate, the anion, over pectin, the methyl ester. The sequence is that of Probable pectate lyase E (plyE) from Aspergillus flavus (strain ATCC 200026 / FGSC A1120 / IAM 13836 / NRRL 3357 / JCM 12722 / SRRC 167).